Here is a 112-residue protein sequence, read N- to C-terminus: ATP synthase subunit c (112 aa).

A run of 2 helical transmembrane segments spans residues 36-56 and 81-101; these read FSVL…AIGM and MFIA…IALI.

This sequence belongs to the ATPase C chain family. F-type ATPases have 2 components, F(1) - the catalytic core - and F(0) - the membrane proton channel. F(1) has five subunits: alpha(3), beta(3), gamma(1), delta(1), epsilon(1). F(0) has three main subunits: a(1), b(2) and c(10-14). The alpha and beta chains form an alternating ring which encloses part of the gamma chain. F(1) is attached to F(0) by a central stalk formed by the gamma and epsilon chains, while a peripheral stalk is formed by the delta and b chains.

The protein resides in the cell inner membrane. F(1)F(0) ATP synthase produces ATP from ADP in the presence of a proton or sodium gradient. F-type ATPases consist of two structural domains, F(1) containing the extramembraneous catalytic core and F(0) containing the membrane proton channel, linked together by a central stalk and a peripheral stalk. During catalysis, ATP synthesis in the catalytic domain of F(1) is coupled via a rotary mechanism of the central stalk subunits to proton translocation. Its function is as follows. Key component of the F(0) channel; it plays a direct role in translocation across the membrane. A homomeric c-ring of between 10-14 subunits forms the central stalk rotor element with the F(1) delta and epsilon subunits. In Campylobacter jejuni (strain RM1221), this protein is ATP synthase subunit c.